Reading from the N-terminus, the 741-residue chain is Protein O-mannosyl-transferase TMTC4 (741 aa).

At 1–10 the chain is on the cytoplasmic side; the sequence is MVELDADLDH. A helical transmembrane segment spans residues 11–31; it reads IVPSVLPPFWAKLVVGFVSLL. Topologically, residues 32 to 110 are extracellular; it reads CFARSYDGDF…FHPVGFHVVN (79 aa). N-linked (GlcNAc...) asparagine glycosylation occurs at asparagine 77. The chain crosses the membrane as a helical span at residues 111 to 131; the sequence is ILLHGSISILMLDVFSVLFGG. The Cytoplasmic segment spans residues 132–146; it reads LQYTGKGQRVHLAPR. 2 helical membrane passes run 147–166 and 167–185; these read ASLL…ECVA and GVVG…LSFL. Residues 186-198 lie on the Cytoplasmic side of the membrane; it reads GYCQAFKETGNKE. The chain crosses the membrane as a helical span at residues 199 to 219; sequence GTHSSTFWVLLSIFLGAVAML. Residues 220–224 lie on the Extracellular side of the membrane; that stretch reads CKEQG. The helical transmembrane segment at 225 to 245 threads the bilayer; sequence ITVLGLNAVFDILVIGKLDIL. Topologically, residues 246-265 are cytoplasmic; the sequence is AAVRKVLHKDKSQENAGMFK. The helical transmembrane segment at 266–286 threads the bilayer; sequence NGGLLFRIALLTIGGTSMLYI. Residues 287–354 lie on the Extracellular side of the membrane; it reads RWKIMGTGPP…PLIKSVGDWR (68 aa). The chain crosses the membrane as a helical span at residues 355–375; the sequence is VIALAALWLCLIGLIFQALCS. Topologically, residues 376–382 are cytoplasmic; it reads EDSCKRR. The chain crosses the membrane as a helical span at residues 383–403; sequence ILTLGLGFLVIPFLPASNLFF. Topologically, residues 404–412 are extracellular; that stretch reads RVGFVVAER. Residues 413-433 form a helical membrane-spanning segment; it reads VLYLPSAGYCVLLTFGFGALS. Topologically, residues 434-441 are cytoplasmic; that stretch reads RHTKKKKP. The helical transmembrane segment at 442 to 462 threads the bilayer; that stretch reads VAAIILGILLINALRCVIRSG. The Extracellular portion of the chain corresponds to 463–741; sequence EWRSEEQLFR…KLEQTQKKDV (279 aa). TPR repeat units follow at residues 482 to 515, 516 to 549, 550 to 583, 584 to 617, 618 to 651, 652 to 685, and 686 to 719; these read AKVH…NPKY, VHAM…QPDF, AAAW…RRKY, PDCY…KPEH, SLAW…IPND, HSLM…NPNV, and ASYH…DPVA. An N-linked (GlcNAc...) asparagine glycan is attached at asparagine 497. A glycan (N-linked (GlcNAc...) asparagine) is linked at asparagine 609. Asparagine 725 is a glycosylation site (N-linked (GlcNAc...) asparagine).

Belongs to the TMTC family.

The protein localises to the membrane. Its subcellular location is the endoplasmic reticulum. It carries out the reaction a di-trans,poly-cis-dolichyl beta-D-mannosyl phosphate + L-seryl-[protein] = 3-O-(alpha-D-mannosyl)-L-seryl-[protein] + a di-trans,poly-cis-dolichyl phosphate + H(+). The enzyme catalyses a di-trans,poly-cis-dolichyl beta-D-mannosyl phosphate + L-threonyl-[protein] = 3-O-(alpha-D-mannosyl)-L-threonyl-[protein] + a di-trans,poly-cis-dolichyl phosphate + H(+). Its pathway is protein modification; protein glycosylation. Transfers mannosyl residues to the hydroxyl group of serine or threonine residues. The 4 members of the TMTC family are O-mannosyl-transferases dedicated primarily to the cadherin superfamily, each member seems to have a distinct role in decorating the cadherin domains with O-linked mannose glycans at specific regions. Also acts as O-mannosyl-transferase on other proteins such as PDIA3. This Mus musculus (Mouse) protein is Protein O-mannosyl-transferase TMTC4.